A 78-amino-acid polypeptide reads, in one-letter code: Large ribosomal subunit protein bL28 (78 aa).

Belongs to the bacterial ribosomal protein bL28 family.

This chain is Large ribosomal subunit protein bL28, found in Pseudoalteromonas atlantica (strain T6c / ATCC BAA-1087).